The sequence spans 163 residues: CASP-like protein 1C2 (163 aa).

Residues 1–7 (MAKLHRL) are Cytoplasmic-facing. A helical transmembrane segment spans residues 8–28 (ISAVLRLAAAGAAAAAAVIMV). At 29-50 (TSHETTSLFGIEMEAKYSYTPS) the chain is on the extracellular side. Residues 51-71 (FVFFVVAFAVTFAYSLLAAVL) traverse the membrane as a helical segment. The Cytoplasmic portion of the chain corresponds to 72–80 (VRPGTTASR). A helical membrane pass occupies residues 81 to 101 (LVLLSDVTVGMLLTGAVAATG). The Extracellular portion of the chain corresponds to 102–129 (AISQVGKSGNEHAGWLPICAQVQAYCGH). The chain crosses the membrane as a helical span at residues 130 to 150 (VMGALIAGFVSLLLYFLIIMY). Residues 151–163 (SLHAVAEPLCSCH) lie on the Cytoplasmic side of the membrane.

It belongs to the Casparian strip membrane proteins (CASP) family. In terms of assembly, homodimer and heterodimers.

It is found in the cell membrane. This Zea mays (Maize) protein is CASP-like protein 1C2.